The primary structure comprises 306 residues: Aspartate carbamoyltransferase catalytic subunit (306 aa).

Residues R55 and T56 each coordinate carbamoyl phosphate. Position 85 (K85) interacts with L-aspartate. Positions 106, 133, and 136 each coordinate carbamoyl phosphate. L-aspartate is bound by residues R166 and R228. Residues L264 and P265 each coordinate carbamoyl phosphate.

This sequence belongs to the aspartate/ornithine carbamoyltransferase superfamily. ATCase family. Heterododecamer (2C3:3R2) of six catalytic PyrB chains organized as two trimers (C3), and six regulatory PyrI chains organized as three dimers (R2).

It catalyses the reaction carbamoyl phosphate + L-aspartate = N-carbamoyl-L-aspartate + phosphate + H(+). It functions in the pathway pyrimidine metabolism; UMP biosynthesis via de novo pathway; (S)-dihydroorotate from bicarbonate: step 2/3. Its function is as follows. Catalyzes the condensation of carbamoyl phosphate and aspartate to form carbamoyl aspartate and inorganic phosphate, the committed step in the de novo pyrimidine nucleotide biosynthesis pathway. This Serratia marcescens protein is Aspartate carbamoyltransferase catalytic subunit.